The chain runs to 304 residues: Dihydroorotate dehydrogenase B (NAD(+)), catalytic subunit (304 aa).

Residues S22 and 46–47 each bind FMN; that span reads KG. Residues K46 and 70 to 74 contribute to the substrate site; that span reads NAIGL. FMN is bound by residues N100 and N128. N128 is a substrate binding site. Catalysis depends on C131, which acts as the Nucleophile. The FMN site is built by K166 and I192. 193-194 provides a ligand contact to substrate; sequence NT. Residues G218, 244–245, and 266–267 contribute to the FMN site; these read GG and GT.

It belongs to the dihydroorotate dehydrogenase family. Type 1 subfamily. In terms of assembly, heterotetramer of 2 PyrK and 2 PyrD type B subunits. FMN is required as a cofactor.

Its subcellular location is the cytoplasm. It carries out the reaction (S)-dihydroorotate + NAD(+) = orotate + NADH + H(+). It participates in pyrimidine metabolism; UMP biosynthesis via de novo pathway; orotate from (S)-dihydroorotate (NAD(+) route): step 1/1. Catalyzes the conversion of dihydroorotate to orotate with NAD(+) as electron acceptor. This Trichlorobacter lovleyi (strain ATCC BAA-1151 / DSM 17278 / SZ) (Geobacter lovleyi) protein is Dihydroorotate dehydrogenase B (NAD(+)), catalytic subunit (pyrD).